The chain runs to 427 residues: Glutamate-1-semialdehyde 2,1-aminomutase (427 aa).

At K265 the chain carries N6-(pyridoxal phosphate)lysine.

This sequence belongs to the class-III pyridoxal-phosphate-dependent aminotransferase family. HemL subfamily. Homodimer. Pyridoxal 5'-phosphate is required as a cofactor.

It localises to the cytoplasm. The enzyme catalyses (S)-4-amino-5-oxopentanoate = 5-aminolevulinate. Its pathway is porphyrin-containing compound metabolism; protoporphyrin-IX biosynthesis; 5-aminolevulinate from L-glutamyl-tRNA(Glu): step 2/2. The chain is Glutamate-1-semialdehyde 2,1-aminomutase from Burkholderia pseudomallei (strain 668).